A 419-amino-acid chain; its full sequence is Hydrolase LUC6 (419 aa).

Serine 238 is a catalytic residue.

The protein belongs to the AB hydrolase superfamily. FUS2 hydrolase family.

It functions in the pathway mycotoxin biosynthesis. Functionally, hydrolase; part of the gene cluster that mediates the biosynthesis of the mycotoxin lucilactaene and the lucilactaene-related compound NG-391 that act as cell cycle inhibitors with potent growth inhibitory activity against malarial parasites, moderate growth inhibitory activity against cancer cells, and no activity against bacteria and fungi. Within the pathway, LUC6 may catalyze the 2-pyrrolidone ring formation to form prelucilactaene C from prelucilactaene B, followed by C-15 hydroxylation by the same enzyme to give prelucilactaene D, epoxydation to yield prelucilactaene E, and finally cyclization to yield prelucilactaene F. The pathway begins with the hybrid PKS-NRPS synthetase LUC5 which is responsible for the condensation of one acetyl-coenzyme A (CoA) unit with six malonyl-CoA units and the amide linkage of the arising heptaketide and homoserine, subsequently releasing the first intermediate prelucilactaene B. Both the cytochrome P450 monooxygenase LUC2 and the hydrolase LUC6 function in parallel in modification of prelucilactaene B. LUC6 may catalyze the 2-pyrrolidone ring formation to form prelucilactaene C from prelucilactaene B, followed by C-15 hydroxylation by the same enzyme to give prelucilactaene D, which is then converted to prelucilactaene E by epoxidation, and finally to prelucilactaene F by cyclization. Prelucilactane D, prelucilactaene E, and prelucilactaene F can be converted to dihydrolucilactaene, NG391, and lucilactaene, respectively, via C-20 methyl group hydroxylation by the cytochrome P450 monooxygenase LUC2. However, LUC2, unlike FUS8 in fusarin C biosynthesis, is not enough for the full oxidation of the C-20 methyl group into carboxylic acid, which is a prerequisite for the final methylation step. The aldehyde dehydrogenase LUC3 is involved in the biosynthesis by further oxidation of the C-20 alcoholic analog prelucilactaene G into a carboxylic derivative. This unidentified carboxylic derivative may be converted to demethyllucilactaene. As the last step, the methyltransferase LUC1 methylates the hydroxyl group at C-21 of demethyllucilactaene to generate lucilactaene. The protein is Hydrolase LUC6 of Fusarium sp.